Consider the following 293-residue polypeptide: Ribosomal protein L11 methyltransferase (293 aa).

T145, G166, D188, and N230 together coordinate S-adenosyl-L-methionine.

Belongs to the methyltransferase superfamily. PrmA family.

It is found in the cytoplasm. The catalysed reaction is L-lysyl-[protein] + 3 S-adenosyl-L-methionine = N(6),N(6),N(6)-trimethyl-L-lysyl-[protein] + 3 S-adenosyl-L-homocysteine + 3 H(+). In terms of biological role, methylates ribosomal protein L11. The protein is Ribosomal protein L11 methyltransferase of Shewanella woodyi (strain ATCC 51908 / MS32).